Here is a 396-residue protein sequence, read N- to C-terminus: Phosphoglycerate kinase (396 aa).

Residues 21–23, arginine 36, 59–62, arginine 118, and arginine 151 contribute to the substrate site; these read DFN and HLGR. ATP is bound by residues lysine 201, glycine 292, glutamate 323, and 349–352; that span reads GGDS.

It belongs to the phosphoglycerate kinase family. In terms of assembly, monomer.

It localises to the cytoplasm. It catalyses the reaction (2R)-3-phosphoglycerate + ATP = (2R)-3-phospho-glyceroyl phosphate + ADP. It participates in carbohydrate degradation; glycolysis; pyruvate from D-glyceraldehyde 3-phosphate: step 2/5. The sequence is that of Phosphoglycerate kinase from Leptospira biflexa serovar Patoc (strain Patoc 1 / Ames).